The chain runs to 287 residues: UTP--glucose-1-phosphate uridylyltransferase 1 (287 aa).

This sequence belongs to the UDPGP type 2 family.

It carries out the reaction alpha-D-glucose 1-phosphate + UTP + H(+) = UDP-alpha-D-glucose + diphosphate. It functions in the pathway glycolipid metabolism; diglucosyl-diacylglycerol biosynthesis. In terms of biological role, catalyzes the formation of UDP-glucose from glucose-1-phosphate and UTP. This is an intermediate step in the biosynthesis of diglucosyl-diacylglycerol (Glc2-DAG), i.e. a glycolipid found in the membrane, which is also used as a membrane anchor for lipoteichoic acid (LTA). This is UTP--glucose-1-phosphate uridylyltransferase 1 (gtaB1) from Staphylococcus saprophyticus subsp. saprophyticus (strain ATCC 15305 / DSM 20229 / NCIMB 8711 / NCTC 7292 / S-41).